We begin with the raw amino-acid sequence, 173 residues long: uncharacterized protein (173 aa).

Residues 1-21 (MFIVFYLILIIFIFIYFHVYI) traverse the membrane as a helical segment.

This sequence to T.pallidum TP0711.

The protein resides in the membrane. This is an uncharacterized protein from Borreliella burgdorferi (strain ATCC 35210 / DSM 4680 / CIP 102532 / B31) (Borrelia burgdorferi).